Here is a 380-residue protein sequence, read N- to C-terminus: 1-deoxy-D-xylulose 5-phosphate reductoisomerase (380 aa).

NADPH contacts are provided by Thr-10, Gly-11, Ser-12, Ile-13, Gly-36, Arg-37, Asn-38, and Asn-120. Lys-121 contacts 1-deoxy-D-xylulose 5-phosphate. Glu-122 provides a ligand contact to NADPH. Asp-146 lines the Mn(2+) pocket. 1-deoxy-D-xylulose 5-phosphate-binding residues include Ser-147, Glu-148, Ser-172, and His-195. Residue Glu-148 participates in Mn(2+) binding. Gly-201 provides a ligand contact to NADPH. Residues Ser-208, Asn-213, Lys-214, and Glu-217 each coordinate 1-deoxy-D-xylulose 5-phosphate. Glu-217 lines the Mn(2+) pocket.

The protein belongs to the DXR family. The cofactor is Mg(2+). Mn(2+) is required as a cofactor.

The enzyme catalyses 2-C-methyl-D-erythritol 4-phosphate + NADP(+) = 1-deoxy-D-xylulose 5-phosphate + NADPH + H(+). It functions in the pathway isoprenoid biosynthesis; isopentenyl diphosphate biosynthesis via DXP pathway; isopentenyl diphosphate from 1-deoxy-D-xylulose 5-phosphate: step 1/6. In terms of biological role, catalyzes the NADPH-dependent rearrangement and reduction of 1-deoxy-D-xylulose-5-phosphate (DXP) to 2-C-methyl-D-erythritol 4-phosphate (MEP). The polypeptide is 1-deoxy-D-xylulose 5-phosphate reductoisomerase (Listeria monocytogenes serotype 4b (strain F2365)).